Consider the following 732-residue polypeptide: uncharacterized protein (732 aa).

The next 2 helical transmembrane spans lie at 687 to 707 and 712 to 732; these read YLFP…GSDL and GVKV…YYTS.

This sequence belongs to the FadG family.

The protein localises to the cell membrane. This is an uncharacterized protein from Bacillus subtilis (strain 168).